The primary structure comprises 651 residues: Histone-lysine N-methyltransferase family member SUVH2 (651 aa).

The tract at residues 1–28 is disordered; sequence MSTLLPFPDLNLMPDSQSSTAGTTAGDT. Positions 15-28 are enriched in low complexity; the sequence is DSQSSTAGTTAGDT. Residues 202–358 enclose the YDG domain; that stretch reads DKHIVGPVTG…KFRLVRIEGQ (157 aa). Positions 434-492 constitute a Pre-SET domain; sequence TGCECKLSCTDDCLCARKNGGEFAYDDNGHLLKGKHVVFECGEFCTCGPSCKSRVTQKG. The Zn(2+) site is built by Cys436, Cys438, Cys442, Cys446, Cys448, Cys474, Cys478, Cys480, and Cys484. In terms of domain architecture, SET spans 495-638; that stretch reads NRLEVFRSKE…PLAELSLDYG (144 aa).

The protein belongs to the class V-like SAM-binding methyltransferase superfamily. Histone-lysine methyltransferase family. Suvar3-9 subfamily. Self-interacts. Interacts with DNA-directed RNA polymerase V subunit NRPE1 and with DRD1 and DMS3. Binds to MORC1/CRT1. In terms of tissue distribution, expressed at low levels in leaves stems and flowers.

The protein localises to the nucleus. Its subcellular location is the chromosome. It is found in the centromere. Histone methyltransferase family member that plays a central role in gene silencing. Together with MORC6 and SUVH9, regulates the silencing of some transposable elements (TEs). According to PubMed:15775980, it is required for normal methylation of 'Lys-9' and 'Lys-27' of histone H3, 'Lys-20' of H4, and cytosine, but PubMed:19043555 see no significant effect on histone methylation when the gene is mutated. According to PubMed:19043555, the protein does not bind S-adenosyl-L-methionine and lacks methyltransferase activity. Instead, it may function downstream of DRM2 in RNA-directed DNA methylation, binding to methylated DNA and recruiting DNA-directed RNA polymerase V to chromatin. The sequence is that of Histone-lysine N-methyltransferase family member SUVH2 (SUVH2) from Arabidopsis thaliana (Mouse-ear cress).